The sequence spans 471 residues: Ribulose bisphosphate carboxylase large chain (471 aa).

Asn-115 and Thr-165 together coordinate substrate. Lys-167 (proton acceptor) is an active-site residue. Lys-169 lines the substrate pocket. Mg(2+) contacts are provided by Lys-193, Asp-195, and Glu-196. N6-carboxylysine is present on Lys-193. The active-site Proton acceptor is the His-286. Positions 287, 319, and 371 each coordinate substrate.

The protein belongs to the RuBisCO large chain family. Type I subfamily. As to quaternary structure, heterohexadecamer of 8 large chains and 8 small chains. It depends on Mg(2+) as a cofactor.

The protein localises to the carboxysome. The enzyme catalyses 2 (2R)-3-phosphoglycerate + 2 H(+) = D-ribulose 1,5-bisphosphate + CO2 + H2O. It catalyses the reaction D-ribulose 1,5-bisphosphate + O2 = 2-phosphoglycolate + (2R)-3-phosphoglycerate + 2 H(+). RuBisCO catalyzes two reactions: the carboxylation of D-ribulose 1,5-bisphosphate, the primary event in carbon dioxide fixation, as well as the oxidative fragmentation of the pentose substrate in the photorespiration process. Both reactions occur simultaneously and in competition at the same active site. The protein is Ribulose bisphosphate carboxylase large chain of Prochlorococcus marinus (strain MIT 9301).